Consider the following 481-residue polypeptide: Cobyric acid synthase (481 aa).

The GATase cobBQ-type domain occupies 247-433 (AFNVVVPLLP…LHGLFDVPDS (187 aa)). C328 acts as the Nucleophile in catalysis. H425 is an active-site residue.

The protein belongs to the CobB/CobQ family. CobQ subfamily.

The protein operates within cofactor biosynthesis; adenosylcobalamin biosynthesis. Its function is as follows. Catalyzes amidations at positions B, D, E, and G on adenosylcobyrinic A,C-diamide. NH(2) groups are provided by glutamine, and one molecule of ATP is hydrogenolyzed for each amidation. The protein is Cobyric acid synthase of Alcanivorax borkumensis (strain ATCC 700651 / DSM 11573 / NCIMB 13689 / SK2).